The primary structure comprises 256 residues: Ubiquinone/menaquinone biosynthesis C-methyltransferase UbiE (256 aa).

Residues Thr79, Asp100, and 128–129 (DA) each bind S-adenosyl-L-methionine.

It belongs to the class I-like SAM-binding methyltransferase superfamily. MenG/UbiE family.

It carries out the reaction a 2-demethylmenaquinol + S-adenosyl-L-methionine = a menaquinol + S-adenosyl-L-homocysteine + H(+). It catalyses the reaction a 2-methoxy-6-(all-trans-polyprenyl)benzene-1,4-diol + S-adenosyl-L-methionine = a 5-methoxy-2-methyl-3-(all-trans-polyprenyl)benzene-1,4-diol + S-adenosyl-L-homocysteine + H(+). Its pathway is quinol/quinone metabolism; menaquinone biosynthesis; menaquinol from 1,4-dihydroxy-2-naphthoate: step 2/2. It participates in cofactor biosynthesis; ubiquinone biosynthesis. In terms of biological role, methyltransferase required for the conversion of demethylmenaquinol (DMKH2) to menaquinol (MKH2) and the conversion of 2-polyprenyl-6-methoxy-1,4-benzoquinol (DDMQH2) to 2-polyprenyl-3-methyl-6-methoxy-1,4-benzoquinol (DMQH2). The protein is Ubiquinone/menaquinone biosynthesis C-methyltransferase UbiE of Pseudomonas syringae pv. tomato (strain ATCC BAA-871 / DC3000).